We begin with the raw amino-acid sequence, 517 residues long: Bifunctional purine biosynthesis protein PurH (517 aa).

One can recognise an MGS-like domain in the interval 1-146 (MKRLALLSTS…KNFAHLTVLC (146 aa)).

It belongs to the PurH family.

It carries out the reaction (6R)-10-formyltetrahydrofolate + 5-amino-1-(5-phospho-beta-D-ribosyl)imidazole-4-carboxamide = 5-formamido-1-(5-phospho-D-ribosyl)imidazole-4-carboxamide + (6S)-5,6,7,8-tetrahydrofolate. It catalyses the reaction IMP + H2O = 5-formamido-1-(5-phospho-D-ribosyl)imidazole-4-carboxamide. The protein operates within purine metabolism; IMP biosynthesis via de novo pathway; 5-formamido-1-(5-phospho-D-ribosyl)imidazole-4-carboxamide from 5-amino-1-(5-phospho-D-ribosyl)imidazole-4-carboxamide (10-formyl THF route): step 1/1. Its pathway is purine metabolism; IMP biosynthesis via de novo pathway; IMP from 5-formamido-1-(5-phospho-D-ribosyl)imidazole-4-carboxamide: step 1/1. In Trichodesmium erythraeum (strain IMS101), this protein is Bifunctional purine biosynthesis protein PurH.